Here is a 159-residue protein sequence, read N- to C-terminus: Ribosomal RNA large subunit methyltransferase H (159 aa).

S-adenosyl-L-methionine contacts are provided by leucine 76 and glycine 108.

The protein belongs to the RNA methyltransferase RlmH family. Homodimer.

It is found in the cytoplasm. The catalysed reaction is pseudouridine(1915) in 23S rRNA + S-adenosyl-L-methionine = N(3)-methylpseudouridine(1915) in 23S rRNA + S-adenosyl-L-homocysteine + H(+). Its function is as follows. Specifically methylates the pseudouridine at position 1915 (m3Psi1915) in 23S rRNA. This is Ribosomal RNA large subunit methyltransferase H from Ligilactobacillus salivarius (strain UCC118) (Lactobacillus salivarius).